The chain runs to 126 residues: Small ribosomal subunit protein eS6 (126 aa).

The protein belongs to the eukaryotic ribosomal protein eS6 family.

The protein is Small ribosomal subunit protein eS6 of Thermococcus sibiricus (strain DSM 12597 / MM 739).